A 1171-amino-acid polypeptide reads, in one-letter code: Pyruvate:ferredoxin oxidoreductase (1171 aa).

Pyruvate contacts are provided by T29 and R112. CoA is bound by residues 424–428, K456, N556, and N598; that span reads SDGTV. 4Fe-4S ferredoxin-type domains are found at residues 677-706 and 733-764; these read NIPQ…PYLA and FRIQ…MVPL. C686, C689, C692, C696, C742, C745, C748, C752, C809, and C812 together coordinate [4Fe-4S] cluster. Thiamine diphosphate contacts are provided by residues E814, C837, 967 to 969, and 995 to 1000; these read DGW and TEVYSN. C837 is a [4Fe-4S] cluster binding site. The Mg(2+) site is built by D967, T995, and V997. N1000 lines the pyruvate pocket. C1075 contributes to the [4Fe-4S] cluster binding site.

Belongs to the pyruvate:ferredoxin/flavodoxin oxidoreductase family. In terms of assembly, homodimer. It depends on [4Fe-4S] cluster as a cofactor. Thiamine diphosphate is required as a cofactor. The cofactor is Mg(2+).

It carries out the reaction 2 oxidized [2Fe-2S]-[ferredoxin] + pyruvate + CoA = 2 reduced [2Fe-2S]-[ferredoxin] + acetyl-CoA + CO2 + H(+). Catalyzes the oxidative decarboxylation of pyruvate to acetyl-CoA and carbon dioxide. The two electrons that are generated as a result of pyruvate decarboxylation are used in the reduction of low potential ferredoxins, which provide reducing equivalents for central metabolism. Also catalyzes the reverse reaction, i.e. the synthesis of pyruvate from acetyl-CoA and carbon dioxide. Appears to function physiologically in both directions. The oxidation of pyruvate by PFOR is required to connect glycolysis and the Wood-Ljungdahl pathway of reductive acetogenesis. The conversion of acetyl-CoA to pyruvate links the Wood-Ljungdahl pathway of autotrophic CO2 fixation to the reductive tricarboxylic acid cycle. Can use methyl viologen as electron carrier in vitro. In Moorella thermoacetica (strain ATCC 39073 / JCM 9320), this protein is Pyruvate:ferredoxin oxidoreductase.